The chain runs to 308 residues: Maspardin (308 aa).

Residues 87–159 (FCDGFRKLLD…NSFWLMPAFM (73 aa)) enclose the AB hydrolase-1 domain. S304 is modified (phosphoserine).

It belongs to the AB hydrolase superfamily. In terms of assembly, interacts with CD4. Interacts with ALDH16A1.

It localises to the cytoplasm. May play a role as a negative regulatory factor in CD4-dependent T-cell activation. The polypeptide is Maspardin (SPG21) (Pongo abelii (Sumatran orangutan)).